We begin with the raw amino-acid sequence, 445 residues long: MHIIAISINHRTADVALREKVAFKADAIRESHLDLFETKSILENVILSTCNRTEVYAVADQIHTGRYYIQRFLARKFGLEVDEIKEMSEVFVGDEAVEHIFRVTAGLDSIVLGETQILGQMRDAFFIAQEEGTTGTIFNHLFKQAITFAKRAHHETDIADNAVSVSYAAVELAKKVFGNLKSKHAVIVGAGEMSELSLLNLLGAGIDNITVVNRTKERAQQLAEKHQTQYADLSNLNELLVNADIVISSTSAQNYVITQEMMNNVLDQRRHEPMVLIDIAVPRDIDPAIELDMNVFSYDIDDLKGLVDANLRERQAAADQIAEQIPAEINEHNDWVNMLGVVPVIRALREKAMHIQQDTMDSIDRKLPDLSERERKVISKHTKSIINQMLKDPIKQAKELSNDKNSSEKLELFQNIFDIEAESEYKKSLAKKERKLSARHILGFE.

Substrate contacts are provided by residues 49–52 (TCNR), Ser-109, 114–116 (ETQ), and Gln-120. Catalysis depends on Cys-50, which acts as the Nucleophile. 189–194 (GAGEMS) is an NADP(+) binding site.

Belongs to the glutamyl-tRNA reductase family. In terms of assembly, homodimer.

The enzyme catalyses (S)-4-amino-5-oxopentanoate + tRNA(Glu) + NADP(+) = L-glutamyl-tRNA(Glu) + NADPH + H(+). It participates in porphyrin-containing compound metabolism; protoporphyrin-IX biosynthesis; 5-aminolevulinate from L-glutamyl-tRNA(Glu): step 1/2. In terms of biological role, catalyzes the NADPH-dependent reduction of glutamyl-tRNA(Glu) to glutamate 1-semialdehyde (GSA). This Staphylococcus carnosus (strain TM300) protein is Glutamyl-tRNA reductase.